Reading from the N-terminus, the 223-residue chain is MIF4G domain-containing protein B (223 aa).

The MIF4G domain occupies 9 to 206 (DYKIQGFDAD…LEMIEYRAAG (198 aa)).

It belongs to the MIF4GD family. Interacts with eif4g1, eif4g2 and slbp; probably tethered by SLBP to the 3'-end of mRNAs ending with the histone stem-loop, it also interacts with eif4g1 which is bound to their 5'-end.

It localises to the cytoplasm. The protein localises to the nucleus. Its function is as follows. Functions in replication-dependent translation of histone mRNAs which differ from other eukaryotic mRNAs in that they do not end with a poly-A tail but a stem-loop. May participate in circularizing those mRNAs specifically enhancing their translation. The chain is MIF4G domain-containing protein B (mif4gd-b) from Xenopus laevis (African clawed frog).